The sequence spans 91 residues: UPF0223 protein SAR1071 (91 aa).

It belongs to the UPF0223 family.

The protein is UPF0223 protein SAR1071 of Staphylococcus aureus (strain MRSA252).